The sequence spans 77 residues: RNA-binding protein Hfq (77 aa).

The Sm domain maps to 10-70; the sequence is DAFLNHVRKT…ISTVMPAQPI (61 aa).

This sequence belongs to the Hfq family. Homohexamer.

Its function is as follows. RNA chaperone that binds small regulatory RNA (sRNAs) and mRNAs to facilitate mRNA translational regulation in response to envelope stress, environmental stress and changes in metabolite concentrations. Also binds with high specificity to tRNAs. The chain is RNA-binding protein Hfq from Jannaschia sp. (strain CCS1).